The following is an 87-amino-acid chain: Small ribosomal subunit protein uS17 (87 aa).

This sequence belongs to the universal ribosomal protein uS17 family. Part of the 30S ribosomal subunit.

In terms of biological role, one of the primary rRNA binding proteins, it binds specifically to the 5'-end of 16S ribosomal RNA. The chain is Small ribosomal subunit protein uS17 from Bacillus thuringiensis (strain Al Hakam).